The following is a 226-amino-acid chain: UPF0173 metal-dependent hydrolase CTN_1413 (226 aa).

It belongs to the UPF0173 family.

This chain is UPF0173 metal-dependent hydrolase CTN_1413, found in Thermotoga neapolitana (strain ATCC 49049 / DSM 4359 / NBRC 107923 / NS-E).